Reading from the N-terminus, the 364-residue chain is Putative F-box/kelch-repeat protein At1g12170 (364 aa).

The 50-residue stretch at 1 to 50 (MMHVILPWELVEEILYRVPPLSLTRFKIVCKQWNTLFKSKSFVNNHLVRV) folds into the F-box domain. 2 Kelch repeats span residues 156–205 (SIYN…LNGN) and 328–364 (CVYI…IPVP).

The polypeptide is Putative F-box/kelch-repeat protein At1g12170 (Arabidopsis thaliana (Mouse-ear cress)).